The chain runs to 103 residues: Large ribosomal subunit protein bL21 (103 aa).

It belongs to the bacterial ribosomal protein bL21 family. As to quaternary structure, part of the 50S ribosomal subunit. Contacts protein L20.

This protein binds to 23S rRNA in the presence of protein L20. The chain is Large ribosomal subunit protein bL21 from Acinetobacter baylyi (strain ATCC 33305 / BD413 / ADP1).